The sequence spans 130 residues: Small ribosomal subunit protein uS8 (130 aa).

Belongs to the universal ribosomal protein uS8 family. As to quaternary structure, part of the 30S ribosomal subunit. Contacts proteins S5 and S12.

Functionally, one of the primary rRNA binding proteins, it binds directly to 16S rRNA central domain where it helps coordinate assembly of the platform of the 30S subunit. This is Small ribosomal subunit protein uS8 from Buchnera aphidicola subsp. Acyrthosiphon pisum (strain 5A).